The sequence spans 239 residues: MEIFPAIDLKEGRCVRLYQGEFSKETVMNEDPVAQAIIFEKFGAKRLHIVDLDGAVAGESLNLSVIERICKAVRIPVQVGGGIRSLVAVEKLFSVGVDKVILGTAALYDKTFLEEAVLLYKEKIIVGIDAKNGFVATRGWLDVSEISYIDLAKQMEKIGVQTIVFTDISKDGTLAGPNIEQLELLQKSVAIRLIASGGVASIQDVKKLNDMNIYGVIIGKALYEKTIDLEEVVEVTKLC.

Residue D8 is the Proton acceptor of the active site. Catalysis depends on D129, which acts as the Proton donor.

Belongs to the HisA/HisF family.

The protein resides in the cytoplasm. It catalyses the reaction 1-(5-phospho-beta-D-ribosyl)-5-[(5-phospho-beta-D-ribosylamino)methylideneamino]imidazole-4-carboxamide = 5-[(5-phospho-1-deoxy-D-ribulos-1-ylimino)methylamino]-1-(5-phospho-beta-D-ribosyl)imidazole-4-carboxamide. It functions in the pathway amino-acid biosynthesis; L-histidine biosynthesis; L-histidine from 5-phospho-alpha-D-ribose 1-diphosphate: step 4/9. The sequence is that of 1-(5-phosphoribosyl)-5-[(5-phosphoribosylamino)methylideneamino] imidazole-4-carboxamide isomerase from Bacillus anthracis (strain A0248).